We begin with the raw amino-acid sequence, 417 residues long: Glutamyl-tRNA(Gln) amidotransferase subunit D (417 aa).

One can recognise an Asparaginase/glutaminase domain in the interval 73-400 (EKVWLLATGG…EEVPRVLTTP (328 aa)). Residues threonine 83, threonine 157, aspartate 158, and lysine 236 contribute to the active site.

The protein belongs to the asparaginase 1 family. GatD subfamily. In terms of assembly, heterodimer of GatD and GatE.

The catalysed reaction is L-glutamyl-tRNA(Gln) + L-glutamine + ATP + H2O = L-glutaminyl-tRNA(Gln) + L-glutamate + ADP + phosphate + H(+). In terms of biological role, allows the formation of correctly charged Gln-tRNA(Gln) through the transamidation of misacylated Glu-tRNA(Gln) in organisms which lack glutaminyl-tRNA synthetase. The reaction takes place in the presence of glutamine and ATP through an activated gamma-phospho-Glu-tRNA(Gln). The GatDE system is specific for glutamate and does not act on aspartate. This chain is Glutamyl-tRNA(Gln) amidotransferase subunit D, found in Pyrobaculum aerophilum (strain ATCC 51768 / DSM 7523 / JCM 9630 / CIP 104966 / NBRC 100827 / IM2).